A 271-amino-acid polypeptide reads, in one-letter code: Tryptophan synthase alpha chain (271 aa).

Residues glutamate 49 and aspartate 60 each act as proton acceptor in the active site.

Belongs to the TrpA family. In terms of assembly, tetramer of two alpha and two beta chains.

It catalyses the reaction (1S,2R)-1-C-(indol-3-yl)glycerol 3-phosphate + L-serine = D-glyceraldehyde 3-phosphate + L-tryptophan + H2O. The protein operates within amino-acid biosynthesis; L-tryptophan biosynthesis; L-tryptophan from chorismate: step 5/5. In terms of biological role, the alpha subunit is responsible for the aldol cleavage of indoleglycerol phosphate to indole and glyceraldehyde 3-phosphate. The polypeptide is Tryptophan synthase alpha chain (Aromatoleum aromaticum (strain DSM 19018 / LMG 30748 / EbN1) (Azoarcus sp. (strain EbN1))).